A 491-amino-acid chain; its full sequence is MESSAKRKMDPDNPDEGPSSKVPRPETPVTKATTFLQTMLRKEVNSQLSLGDPLFPELAEESLKTFEQVTEDCNENPEKDVLTELVKQIKVRVDMVRHRIKEHMLKKYTQTEEKFTGAFNMMGGCLQNALDILDKVHEPFEDMKCIGLTMQSMYENYIVPEDKREMWMACIKELHDVSKGAANKLGGALQAKARAKKDELRRKMMYMCYRNIEFFTKNSAFPKTTNGCSQAMAALQNLPQCSPDEIMSYAQKIFKILDEERDKVLTHIDHIFMDILTTCVETMCNEYKVTSDACMMTMYGGISLLSEFCRVLCCYVLEETSVMLAKRPLITKPEVISVMKRRIEEICMKVFAQYILGADPLRVCSPSVDDLRAIAEESDEEEAIVAYTLATAGASSSDSLVSPPESPVPATIPLSSVIVAENSDQEESEQSDEEQEEGAQEEREDTVSVKSEPVSEIEEVASEEEEDGAEEPTASGGKSTHPMVTRSKADQ.

Positions 1 to 11 are enriched in basic and acidic residues; the sequence is MESSAKRKMDP. Residues 1–24 are nuclear localization signal; that stretch reads MESSAKRKMDPDNPDEGPSSKVPR. Residues 1 to 30 form a disordered region; the sequence is MESSAKRKMDPDNPDEGPSSKVPRPETPVT. The interaction with host PML, interference with PML sumoylation and disruption of PML-associated nuclear bodies stretch occupies residues 132-346; it reads ILDKVHEPFE…SVMKRRIEEI (215 aa). An interaction with host STAT2 region spans residues 373–445; the sequence is AIAEESDEEE…EEGAQEERED (73 aa). The interval 410–420 is modulation of STAT3/STAT1 signaling; sequence ATIPLSSVIVA. Residues 410–445 are interaction with host STAT3; it reads ATIPLSSVIVAENSDQEESEQSDEEQEEGAQEERED. Residues 421–472 form an acidic region; that stretch reads ENSDQEESEQSDEEQEEGAQEEREDTVSVKSEPVSEIEEVASEEEEDGAEEP. The segment at 421–491 is disordered; the sequence is ENSDQEESEQ…PMVTRSKADQ (71 aa). Residues 423 to 444 show a composition bias toward acidic residues; the sequence is SDQEESEQSDEEQEEGAQEERE. Positions 449–452 are interaction with host SUMO1; sequence VKSE. K450 participates in a covalent cross-link: Glycyl lysine isopeptide (Lys-Gly) (interchain with G-Cter in SUMO). The segment covering 455 to 470 has biased composition (acidic residues); it reads SEIEEVASEEEEDGAE. A chromosome-tethering domain (CTD), binding to histones region spans residues 475 to 491; the sequence is SGGKSTHPMVTRSKADQ.

Belongs to the HHV-5 IE1 protein family. In terms of assembly, forms homodimers. Interacts with human p53/TP53; this interaction inhibits p53/TP53-dependent transactivation activity. Interacts with host STAT1. Interacts with host STAT2; this interaction promotes viral growth and counteracts the antiviral interferon response. May also interact with the host STAT1-STAT2 heterodimer. Interacts with host STAT3; this interaction leads to STAT3 nuclear accumulation and disruption of IL6-induced STAT3 phosphorylation. Interacts with host PML; this interaction probably inhibits PML regulation of type I and type II interferon-induced gene expression. Interacts with host DAXX. Interacts with host SP100. Interacts with host E2F1. Interacts with host RB1. Interacts with host HDAC1; this interaction inhibits histone deacetylation and promotes viral transcription. Interacts with host HDAC2; this interaction inhibits histone deacetylation and promotes viral transcription. Interacts with host HDAC3; this interaction inhibits histone deacetylation and promotes viral transcription. Interacts with host PLSCR1; this interaction inhibits IE1 transactivating activity. Sumoylated by host PML/nuclear domain 10. Sumoylation abolishes the interaction with host STAT2 and thus the IE1-mediated repression of interferon-stimulated genes.

It is found in the host nucleus. Functionally, plays an important role in transactivating viral early genes as well as activating its own promoter, probably by altering the viral chromatin structure. Expression of IE1 and IE2 proteins is critical for the establishment of lytic infection and reactivation from viral latency. Disrupts PML-associated ND10 nuclear bodies by interfering with host PML and SP100 sumoylation thereby altering the regulation of type I and type II interferon-induced gene expression. Promotes efficient viral growth by interacting with and directing host SP100 to degradation, leading to enhanced acetylation level of histones. In addition, functions in counteracting the host innate antiviral response. Inhibits the type I interferon pathway by directly interacting with and sequestrating host STAT2. Also targets type II interferon pathway by repressing IL6- and STAT3 target genes. Repression of STAT3 genes is due to STAT3 nuclear accumulation and disruption of IL6-induced STAT3 phosphorylation by IE1. This repression is followed by phosphorylation and activation of STAT1. Inhibits host ISG transcription by sequestering host ISGF3 in a PML- and STAT2- binding dependent manner. Alters host cell cycle progression, probably through its interaction with host E2F1 or RB1 that overcomes the RB1-mediated repression of E2F-responsive promoters. This is Immediate early protein IE1 (UL123) from Human cytomegalovirus (strain Merlin) (HHV-5).